We begin with the raw amino-acid sequence, 158 residues long: E3 ubiquitin ligase complex SCF subunit sconC (158 aa).

Residues 100 to 158 (ILAANYLDIKALLDVGCKTVANMIKGKSPEEIRKTFNIQNDFTPEEEDQIRRENEWAEE) form an interaction with the F-box domain of F-box proteins region.

Belongs to the SKP1 family. Component of the SCF (SKP1-CUL1-F-box protein) E3 ubiquitin ligase complexes.

It participates in protein modification; protein ubiquitination. In terms of biological role, essential component of the SCF (SKP1-CUL1-F-box protein) E3 ubiquitin ligase complexes, which mediate the ubiquitination and subsequent proteasomal degradation of target proteins. Controls sulfur metabolite repression, probably by mediating the inactivation or degradation of the metR transcription factor. The protein is E3 ubiquitin ligase complex SCF subunit sconC (sconC) of Aspergillus fumigatus (strain CBS 144.89 / FGSC A1163 / CEA10) (Neosartorya fumigata).